We begin with the raw amino-acid sequence, 464 residues long: Cysteine--tRNA ligase (464 aa).

Residue Cys28 coordinates Zn(2+). The short motif at 30–40 is the 'HIGH' region element; sequence ITAYDFCHIGH. Positions 210, 235, and 239 each coordinate Zn(2+). Positions 267–271 match the 'KMSKS' region motif; the sequence is KMSKS. Lys270 is a binding site for ATP.

It belongs to the class-I aminoacyl-tRNA synthetase family. Monomer. It depends on Zn(2+) as a cofactor.

The protein resides in the cytoplasm. It carries out the reaction tRNA(Cys) + L-cysteine + ATP = L-cysteinyl-tRNA(Cys) + AMP + diphosphate. This is Cysteine--tRNA ligase from Buchnera aphidicola subsp. Baizongia pistaciae (strain Bp).